A 284-amino-acid chain; its full sequence is Putative ABC transporter ATP-binding protein sll0385 (284 aa).

The region spanning 51 to 278 is the ABC transporter domain; it reads IRVRELSFAY…QTLMESHGLE (228 aa). ATP is bound at residue 84-91; it reads GHNGCGKT.

Belongs to the ABC transporter superfamily.

The protein resides in the cell inner membrane. Its function is as follows. Probably part of an ABC transporter complex. Responsible for energy coupling to the transport system. The protein is Putative ABC transporter ATP-binding protein sll0385 of Synechocystis sp. (strain ATCC 27184 / PCC 6803 / Kazusa).